The chain runs to 464 residues: Fumarate hydratase class II (464 aa).

Residues 98-100, arginine 126, 129-132, 139-141, and threonine 187 each bind substrate; these read SGT, HPND, and SSN. Histidine 188 serves as the catalytic Proton donor/acceptor. Residue serine 318 is part of the active site. Substrate contacts are provided by residues serine 319 and 324-326; that span reads KVN.

It belongs to the class-II fumarase/aspartase family. Fumarase subfamily. Homotetramer.

It localises to the cytoplasm. It catalyses the reaction (S)-malate = fumarate + H2O. It participates in carbohydrate metabolism; tricarboxylic acid cycle; (S)-malate from fumarate: step 1/1. Its function is as follows. Involved in the TCA cycle. Catalyzes the stereospecific interconversion of fumarate to L-malate. This chain is Fumarate hydratase class II, found in Photorhabdus laumondii subsp. laumondii (strain DSM 15139 / CIP 105565 / TT01) (Photorhabdus luminescens subsp. laumondii).